A 283-amino-acid chain; its full sequence is MNDKFTTASFLESKKQGRKITMLTAYDYPTAKILDEAGVDSILVGDSLGMVVLGYEDTTRVTMDDMVHHTKAVVRGVKRAMVVADMPFLSYHTGKNDSVRNAGRLVSEGGCKAVKLEGGEDIIENVKAIISAGIPVVGHLGYTPQSINVFGGHKAQGKTIDTAKKIYRDALLLQKAGVFAVVLECVPYKLAAFISKRLDIPTIGIGSGPDCDGQVLVIHDLTGMFKDFTPKHVKKYAEIGETVSTAVKSYIDEVKNGVFPTEKNSFKVDDWIIDELDKVRFDI.

Residues aspartate 46 and aspartate 85 each coordinate Mg(2+). Residues 46-47, aspartate 85, and lysine 115 contribute to the 3-methyl-2-oxobutanoate site; that span reads DS. Glutamate 117 contacts Mg(2+). Residue glutamate 184 is the Proton acceptor of the active site.

Belongs to the PanB family. Homodecamer; pentamer of dimers. Requires Mg(2+) as cofactor.

It is found in the cytoplasm. The catalysed reaction is 3-methyl-2-oxobutanoate + (6R)-5,10-methylene-5,6,7,8-tetrahydrofolate + H2O = 2-dehydropantoate + (6S)-5,6,7,8-tetrahydrofolate. Its pathway is cofactor biosynthesis; (R)-pantothenate biosynthesis; (R)-pantoate from 3-methyl-2-oxobutanoate: step 1/2. Functionally, catalyzes the reversible reaction in which hydroxymethyl group from 5,10-methylenetetrahydrofolate is transferred onto alpha-ketoisovalerate to form ketopantoate. The chain is 3-methyl-2-oxobutanoate hydroxymethyltransferase from Acetivibrio thermocellus (strain ATCC 27405 / DSM 1237 / JCM 9322 / NBRC 103400 / NCIMB 10682 / NRRL B-4536 / VPI 7372) (Clostridium thermocellum).